Here is a 632-residue protein sequence, read N- to C-terminus: Threonine--tRNA ligase (632 aa).

The TGS domain occupies 1–61; that stretch reads MPIVTLPDGS…EHDAEVSILT (61 aa). Positions 242–533 are catalytic; it reads DHRKLARKLD…LIEHYAGSMP (292 aa). Cysteine 333, histidine 384, and histidine 510 together coordinate Zn(2+).

The protein belongs to the class-II aminoacyl-tRNA synthetase family. Homodimer. Zn(2+) is required as a cofactor.

The protein localises to the cytoplasm. The catalysed reaction is tRNA(Thr) + L-threonine + ATP = L-threonyl-tRNA(Thr) + AMP + diphosphate + H(+). In terms of biological role, catalyzes the attachment of threonine to tRNA(Thr) in a two-step reaction: L-threonine is first activated by ATP to form Thr-AMP and then transferred to the acceptor end of tRNA(Thr). Also edits incorrectly charged L-seryl-tRNA(Thr). The polypeptide is Threonine--tRNA ligase (Chromohalobacter salexigens (strain ATCC BAA-138 / DSM 3043 / CIP 106854 / NCIMB 13768 / 1H11)).